Consider the following 235-residue polypeptide: Motile sperm domain-containing protein 3 (235 aa).

2 disordered regions span residues 1–30 (MRRG…PSGP) and 143–170 (ELQG…PFPE). The MSP domain maps to 33-145 (PVLVFPPDLV…RAPAYPLELQ (113 aa)). 2 consecutive transmembrane segments (helical) span residues 180–200 (SFLL…LPLQ) and 213–233 (VSLG…MVFL).

It is found in the membrane. The chain is Motile sperm domain-containing protein 3 (MOSPD3) from Bos taurus (Bovine).